The following is a 452-amino-acid chain: Probable carboxypeptidase ACLA_088580 (452 aa).

The first 18 residues, 1-18, serve as a signal peptide directing secretion; that stretch reads MRSLTLLLSLSTALRSVA. N-linked (GlcNAc...) asparagine glycosylation is found at Asn107 and Asn156. Asp175 contributes to the Zn(2+) binding site. Glu207 acts as the Proton acceptor in catalysis. Residue Glu208 coordinates Zn(2+).

It belongs to the peptidase M20A family. Zn(2+) serves as cofactor.

The protein localises to the secreted. In Aspergillus clavatus (strain ATCC 1007 / CBS 513.65 / DSM 816 / NCTC 3887 / NRRL 1 / QM 1276 / 107), this protein is Probable carboxypeptidase ACLA_088580.